Reading from the N-terminus, the 183-residue chain is uncharacterized protein (183 aa).

Belongs to the asfivirus S183L family.

This is an uncharacterized protein from Ornithodoros (relapsing fever ticks).